A 345-amino-acid polypeptide reads, in one-letter code: Leucine-rich repeat and transmembrane domain-containing protein 1 (345 aa).

The N-terminal stretch at 1–27 (MKGELLLFSSVIVLLQVVCSCPDKCYC) is a signal peptide. The LRRNT domain maps to 28-50 (QSSTNFVDCSQQGLAEIPSHLPP). Topologically, residues 28-288 (QSSTNFVDCS…PANLRHAIAT (261 aa)) are extracellular. 5 LRR repeats span residues 51–72 (QTRTLHLQDNQIHHLPAFAFRS), 75–96 (WLMTLNLSNNSLSNLAPGAFHG), 99–120 (HLQVLNLTQNSLLSLESRLFHS), 123–144 (QLRELDLSSNNISHLPTSLGET), and 147–168 (NLTILAVQQNQLQQLDRALLES). N-linked (GlcNAc...) asparagine glycosylation occurs at N104. N147 is a glycosylation site (N-linked (GlcNAc...) asparagine). Residues 180-234 (NLWKCNCHLLGLKLWLEKFVYKGGLTDGIICESPDTWKGKDLLRIPHELYQPCPL) form the LRRCT domain. The helical transmembrane segment at 289–309 (VIITGVVCGIVCLMMLAAAIY) threads the bilayer. The Cytoplasmic portion of the chain corresponds to 310-345 (GCTYAAITAQYHGGPLAQTNDPGKVEEKERFDSSPA). The disordered stretch occupies residues 326–345 (AQTNDPGKVEEKERFDSSPA). A compositionally biased stretch (basic and acidic residues) spans 332–345 (GKVEEKERFDSSPA).

The protein localises to the membrane. In Homo sapiens (Human), this protein is Leucine-rich repeat and transmembrane domain-containing protein 1 (LRTM1).